The sequence spans 209 residues: Large ribosomal subunit protein uL3 (209 aa).

The segment at 119 to 145 (AIKRHGQSRGPMSHGSHFHRAPGSVGM) is disordered.

It belongs to the universal ribosomal protein uL3 family. In terms of assembly, part of the 50S ribosomal subunit. Forms a cluster with proteins L14 and L19.

In terms of biological role, one of the primary rRNA binding proteins, it binds directly near the 3'-end of the 23S rRNA, where it nucleates assembly of the 50S subunit. This Staphylococcus aureus (strain COL) protein is Large ribosomal subunit protein uL3.